The chain runs to 496 residues: Flt3-interacting zinc finger protein 1 (496 aa).

An N-acetylmethionine modification is found at Met1. C2H2-type zinc fingers lie at residues 23–45 (FHCS…FARH), 51–73 (HACP…LRSH), 79–101 (YRCS…QVVH), 107–130 (YCCL…KRQH), 200–222 (FACG…WAAH), and 228–250 (FKCP…KLTH). Positions 250-280 (HDLQGPGAPPAQAWAAGPGAGPETAGEGTAA) are disordered. Positions 259–280 (PAQAWAAGPGAGPETAGEGTAA) are enriched in low complexity. C2H2-type zinc fingers lie at residues 331-352 (YQCD…LEAH), 358-381 (YGCG…RVSH), 414-436 (FGCS…VLVH), 442-464 (FPCL…RLLH), and 470-492 (FPCH…LKLH). The segment at 378–412 (RVSHGEGGGEEAATAAREREPASGEPPSGSGRGKK) is disordered.

As to quaternary structure, interacts with FLT3 cytoplasmic catalytic domain, following receptor stimulation, in a kinase-independent manner. Does not interact with other structurally related receptor tyrosine kinases, including KIT, CSF1R and PDGFR. Interacts with NRL. As to expression, widely expressed.

The protein resides in the cytoplasm. The protein localises to the nucleus. Functionally, may be a transcriptional repressor of NRL function in photoreceptors. Does not repress CRX-mediated transactivation. This is Flt3-interacting zinc finger protein 1 (FIZ1) from Homo sapiens (Human).